Here is a 690-residue protein sequence, read N- to C-terminus: Adhesion G protein-coupled receptor L4 (690 aa).

The signal sequence occupies residues Met1–Thr19. The EGF-like 1 domain maps to Gln20–Glu57. Topologically, residues Gln20 to Gln432 are extracellular. The N-linked (GlcNAc...) asparagine glycan is linked to Asn21. 6 disulfide bridges follow: Cys22–Cys33, Cys27–Cys42, Cys44–Cys56, Cys62–Cys75, Cys69–Cys84, and Cys86–Cys107. Residues Asp58–Ile108 form the EGF-like 2; calcium-binding domain. Residues Asn64 and Asn74 are each glycosylated (N-linked (GlcNAc...) asparagine). Asn127, Asn177, Asn188, Asn249, Asn381, and Asn395 each carry an N-linked (GlcNAc...) asparagine glycan. The region spanning Thr244–Ile419 is the GAIN-B domain. 2 disulfide bridges follow: Cys370–Cys401 and Cys389–Cys403. Positions Cys370–Ile419 are GPS. A helical membrane pass occupies residues Leu433–Ser453. The Cytoplasmic portion of the chain corresponds to Glu454–Thr460. A helical transmembrane segment spans residues Thr461 to Ile481. At Asn482–Tyr499 the chain is on the extracellular side. The helical transmembrane segment at Phe500–Val520 threads the bilayer. Residues Gly521–Asn532 are Cytoplasmic-facing. The chain crosses the membrane as a helical span at residues Phe533–Tyr553. Residues Arg554 to Ser573 are Extracellular-facing. Residues Phe574–Tyr594 traverse the membrane as a helical segment. At Lys595–Arg618 the chain is on the cytoplasmic side. Residues Gly619–Val639 traverse the membrane as a helical segment. Residues His640–Ala646 lie on the Extracellular side of the membrane. A helical membrane pass occupies residues Tyr647 to Leu667. Topologically, residues Ser668–Arg690 are cytoplasmic.

The protein belongs to the G-protein coupled receptor 2 family. Adhesion G-protein coupled receptor (ADGR) subfamily. As to quaternary structure, heterodimer of 2 chains generated by proteolytic processing; the large extracellular N-terminal fragment and the membrane-bound C-terminal fragment predominantly remain associated and non-covalently linked. In terms of processing, glycosylated. Post-translationally, proteolytically cleaved into 2 subunits, an extracellular alpha subunit and a seven-transmembrane subunit. In terms of tissue distribution, detected in the majority of epithelial cells in tumor and normal tissues. Expressed also in human umbilical vein endothelial cells.

It localises to the cell membrane. Its function is as follows. Endothelial orphan receptor that acts as a key regulator of angiogenesis. In Homo sapiens (Human), this protein is Adhesion G protein-coupled receptor L4.